Here is an 864-residue protein sequence, read N- to C-terminus: Leucine--tRNA ligase (864 aa).

The short motif at 42–52 (PYPSGKLHMGH) is the 'HIGH' region element. The 'KMSKS' region signature appears at 624 to 628 (KMSKS). ATP is bound at residue K627.

The protein belongs to the class-I aminoacyl-tRNA synthetase family.

Its subcellular location is the cytoplasm. It catalyses the reaction tRNA(Leu) + L-leucine + ATP = L-leucyl-tRNA(Leu) + AMP + diphosphate. The polypeptide is Leucine--tRNA ligase (Burkholderia cenocepacia (strain HI2424)).